A 91-amino-acid chain; its full sequence is Non-specific lipid-transfer protein 1 (91 aa).

4 cysteine pairs are disulfide-bonded: Cys4–Cys51, Cys14–Cys28, Cys29–Cys74, and Cys49–Cys88.

This sequence belongs to the plant LTP family. In terms of tissue distribution, detected in seeds (at protein level).

In terms of biological role, plant non-specific lipid-transfer proteins transfer phospholipids as well as galactolipids across membranes. May play a role in wax or cutin deposition in the cell walls of expanding epidermal cells and certain secretory tissues. The sequence is that of Non-specific lipid-transfer protein 1 from Carum carvi (Caraway).